The primary structure comprises 200 residues: Glycerol-3-phosphate acyltransferase (200 aa).

5 helical membrane passes run 2–22 (FNIPAVAVSYLIGSLSFAVIV), 51–71 (KAAALTLLGDAAKGLVAVLLA), 84–104 (AIAAVALAALVGHMWPVFFGF), 114–134 (LGVLLALSPATALVCALIWLV), and 159–179 (FFMPHVSWVWATVAIALLVLF).

This sequence belongs to the PlsY family. Probably interacts with PlsX.

The protein resides in the cell inner membrane. It carries out the reaction an acyl phosphate + sn-glycerol 3-phosphate = a 1-acyl-sn-glycero-3-phosphate + phosphate. Its pathway is lipid metabolism; phospholipid metabolism. Catalyzes the transfer of an acyl group from acyl-phosphate (acyl-PO(4)) to glycerol-3-phosphate (G3P) to form lysophosphatidic acid (LPA). This enzyme utilizes acyl-phosphate as fatty acyl donor, but not acyl-CoA or acyl-ACP. This is Glycerol-3-phosphate acyltransferase from Neisseria meningitidis serogroup B (strain ATCC BAA-335 / MC58).